The chain runs to 671 residues: MSKSFKLHSVFKPAGDQPEAIRKLEEGLENGLAHQTLLGVTGSGKTFTVANVIADLNRPTMILAPNKTLAAQLYGEMKEFFPDNAVEYFVSYYDYYQPEAYVPSSDTFIEKDASVNEHIEQMRLSATKALLERRDVVVVASVSAIYGLGVPDLYLKMMLHLTRGMIIDQRSILRRLSELQYSRNDQVFQRGTFRVRGEVIDIFPAESDEWALRVELFDEEVERLSIFDPLTGQLQHEVPRFTVYPKTHYVTPRERILQAMEEIKVELAERRQVLLANNKLLEEQRLSQRTQFDLEMMNELGYCSGIENYSRYLSGRGPGEAPPTLFDYLPADGLLIVDESHVTIPQIGGMYKGDRSRKETLVEYGFRLPSALDNRPMRFEEFEALAPQTIYVSATPGKYELEKSGGDIIEQVVRPTGLLDPLIEVRPVATQVDDLLSEIRIRAAINERVLVTTLTKRMAEDLTDYLSEHGAKVRYLHSDIDTVERVEIIRDLRLGEFDVLVGINLLREGLDMPEVSLVAILDADKEGFLRSERSLIQTIGRAARNLNGKAILYGDRITASMEKAIGETERRRAKQQAYNEERRIIPQGLNKKIGDILQLGQPSMRGKGKGRGSHKMADTTQYQSLSPKALDQKIRELEAKMYTYAQNLEFEQAAELRDQVHQLRQQFIAIS.

The region spanning 26–183 (EGLENGLAHQ…RRLSELQYSR (158 aa)) is the Helicase ATP-binding domain. 39-46 (GVTGSGKT) is an ATP binding site. The Beta-hairpin motif lies at 92–115 (YYDYYQPEAYVPSSDTFIEKDASV). The Helicase C-terminal domain occupies 431-593 (QVDDLLSEIR…IIPQGLNKKI (163 aa)). Residues 631–666 (DQKIRELEAKMYTYAQNLEFEQAAELRDQVHQLRQQ) form the UVR domain.

This sequence belongs to the UvrB family. In terms of assembly, forms a heterotetramer with UvrA during the search for lesions. Interacts with UvrC in an incision complex.

The protein resides in the cytoplasm. In terms of biological role, the UvrABC repair system catalyzes the recognition and processing of DNA lesions. A damage recognition complex composed of 2 UvrA and 2 UvrB subunits scans DNA for abnormalities. Upon binding of the UvrA(2)B(2) complex to a putative damaged site, the DNA wraps around one UvrB monomer. DNA wrap is dependent on ATP binding by UvrB and probably causes local melting of the DNA helix, facilitating insertion of UvrB beta-hairpin between the DNA strands. Then UvrB probes one DNA strand for the presence of a lesion. If a lesion is found the UvrA subunits dissociate and the UvrB-DNA preincision complex is formed. This complex is subsequently bound by UvrC and the second UvrB is released. If no lesion is found, the DNA wraps around the other UvrB subunit that will check the other stand for damage. The chain is UvrABC system protein B from Yersinia pestis bv. Antiqua (strain Antiqua).